The following is a 390-amino-acid chain: Queuine tRNA-ribosyltransferase (390 aa).

Catalysis depends on Asp-92, which acts as the Proton acceptor. Substrate is bound by residues 92–96 (DSGGF), Asp-146, Gln-195, and Gly-222. The tract at residues 253–259 (GVGTPED) is RNA binding. Catalysis depends on Asp-272, which acts as the Nucleophile. The tract at residues 277–281 (TRNAR) is RNA binding; important for wobble base 34 recognition. Cys-310, Cys-312, Cys-315, and His-354 together coordinate Zn(2+).

This sequence belongs to the queuine tRNA-ribosyltransferase family. In terms of assembly, homodimer. Within each dimer, one monomer is responsible for RNA recognition and catalysis, while the other monomer binds to the replacement base PreQ1. Zn(2+) is required as a cofactor.

It carries out the reaction 7-aminomethyl-7-carbaguanine + guanosine(34) in tRNA = 7-aminomethyl-7-carbaguanosine(34) in tRNA + guanine. It participates in tRNA modification; tRNA-queuosine biosynthesis. In terms of biological role, catalyzes the base-exchange of a guanine (G) residue with the queuine precursor 7-aminomethyl-7-deazaguanine (PreQ1) at position 34 (anticodon wobble position) in tRNAs with GU(N) anticodons (tRNA-Asp, -Asn, -His and -Tyr). Catalysis occurs through a double-displacement mechanism. The nucleophile active site attacks the C1' of nucleotide 34 to detach the guanine base from the RNA, forming a covalent enzyme-RNA intermediate. The proton acceptor active site deprotonates the incoming PreQ1, allowing a nucleophilic attack on the C1' of the ribose to form the product. After dissociation, two additional enzymatic reactions on the tRNA convert PreQ1 to queuine (Q), resulting in the hypermodified nucleoside queuosine (7-(((4,5-cis-dihydroxy-2-cyclopenten-1-yl)amino)methyl)-7-deazaguanosine). This Delftia acidovorans (strain DSM 14801 / SPH-1) protein is Queuine tRNA-ribosyltransferase.